We begin with the raw amino-acid sequence, 139 residues long: uncharacterized protein (139 aa).

Residues 1–116 form a disordered region; the sequence is MYNPWQVGAS…TRPRVVARGK (116 aa). Low complexity-rich tracts occupy residues 50–70 and 84–110; these read RPRPFSSSPRSASGRLRGPRP and LPAYLPPAAALDSQTSAPTVSPVTRPR.

This is an uncharacterized protein from Homo sapiens (Human).